Reading from the N-terminus, the 181-residue chain is Prepronociceptin (181 aa).

The signal sequence occupies residues 1–19 (MKILFCDVLLLSLLSSVFS). A propeptide spanning residues 20–95 (SCPEDCLTCQ…QSKASEMQHL (76 aa)) is cleaved from the precursor. The disordered stretch occupies residues 103-125 (SVVQARDAEPEADAEPVADEADE). Tandem repeats lie at residues 109 to 114 (DAEPEA) and 115 to 120 (DAEPVA). The segment at 109–120 (DAEPEADAEPVA) is 2 X 6 AA tandem repeats of D-A-E-P-X-A. The segment covering 112 to 125 (PEADAEPVADEADE) has biased composition (acidic residues). The propeptide occupies 174-181 (TLHQNGNV).

It belongs to the opioid neuropeptide precursor family. In terms of processing, specific enzymatic cleavages at paired basic residues probably yield other active peptides besides nociceptin. Post-translationally, the N-terminal domain contains 6 conserved cysteines thought to be involved in disulfide bonding and/or processing. As to expression, expressed predominantly in the spinal cord and brain, being more abundant in the hypothalamus and striatum. Also found in small amounts in ovary.

The protein localises to the secreted. Its function is as follows. Ligand of the opioid receptor-like receptor OPRL1. It may act as a transmitter in the brain by modulating nociceptive and locomotor behavior. May be involved in neuronal differentiation and development. In terms of biological role, blocks nociceptin action in pain transmission by inhibiting nociceptin-induced hyperalgesia and allodynia. Has potent analgesic activity. This chain is Prepronociceptin (Pnoc), found in Rattus norvegicus (Rat).